We begin with the raw amino-acid sequence, 76 residues long: Toxin Acra III-2 (76 aa).

In terms of domain architecture, LCN-type CS-alpha/beta spans 3 to 67 (VPGNYPLNTY…IWDAVKNHCT (65 aa)). 3 cysteine pairs are disulfide-bonded: Cys-18/Cys-41, Cys-27/Cys-46, and Cys-31/Cys-48.

It belongs to the long (3 C-C) scorpion toxin superfamily. Sodium channel inhibitor family. Beta subfamily. Expressed by the venom gland.

It is found in the secreted. Binds to sodium channels (Nav) and affects the channel activation process. This chain is Toxin Acra III-2, found in Androctonus crassicauda (Arabian fat-tailed scorpion).